The chain runs to 351 residues: Ribosomal RNA large subunit methyltransferase N (351 aa).

The active-site Proton acceptor is glutamate 92. Positions 105 to 337 constitute a Radical SAM core domain; it reads GHPRSTICVS…CTVRVEKGTE (233 aa). Cysteine 112 and cysteine 342 are oxidised to a cystine. Cysteine 119, cysteine 123, and cysteine 126 together coordinate [4Fe-4S] cluster. S-adenosyl-L-methionine is bound by residues 169-170, serine 201, 224-226, and asparagine 300; these read GE and SLH. The active-site S-methylcysteine intermediate is cysteine 342.

Belongs to the radical SAM superfamily. RlmN family. It depends on [4Fe-4S] cluster as a cofactor.

It localises to the cytoplasm. The enzyme catalyses adenosine(2503) in 23S rRNA + 2 reduced [2Fe-2S]-[ferredoxin] + 2 S-adenosyl-L-methionine = 2-methyladenosine(2503) in 23S rRNA + 5'-deoxyadenosine + L-methionine + 2 oxidized [2Fe-2S]-[ferredoxin] + S-adenosyl-L-homocysteine. In terms of biological role, specifically methylates position 2 of adenine 2503 in 23S rRNA. The protein is Ribosomal RNA large subunit methyltransferase N of Nitrosopumilus maritimus (strain SCM1).